A 354-amino-acid polypeptide reads, in one-letter code: MVYPRLLINLKEIEENARKVVEMASRRGIEIVGVTKVTLGDPRFAETLRKAGIGILGESRIRNVLRMKKAGIEGPFMLLRLPMMSELVEDVKHFDYIMVSDPDVAKKVDELSREMKRNVKIIYMIDVGDLREGVWFEKAVEEIAQCRGANIVGIGTNFGCYGGIIPTREKFEILLDIKEKLEKNHGFNIEIVSGGNTPALYALENGEIPEGINQLRIGEAIVLGRDITNNRVIDWLSQNTFLIEAEVIEVKEKPSVPLGKRGLDVFGRKVDFVDRGIRKRAICALGEQDIDSRGLIPVDKGVEVLHASSDHIVLDVTDFGDVKVGDVFRFRMTYSCLLKAMTSPFVEKVYEPSI.

Position 36 is an N6-(pyridoxal phosphate)lysine (Lys-36).

This sequence belongs to the alanine racemase family. Homodimer. Pyridoxal 5'-phosphate is required as a cofactor.

It catalyses the reaction L-lysine = D-lysine. It carries out the reaction L-ornithine = D-ornithine. It participates in cell wall biogenesis; peptidoglycan biosynthesis. Functionally, catalyzes the interconversion of D-lysine and L-lysine. Has also high activity toward ornithine, and weaker activity toward alanine. Contributes to production of D-lysine and D-alanine for use as peptidoglycan components. The polypeptide is Lysine racemase (Thermotoga maritima (strain ATCC 43589 / DSM 3109 / JCM 10099 / NBRC 100826 / MSB8)).